The sequence spans 293 residues: DegV domain-containing protein MG326 homolog (293 aa).

In terms of domain architecture, DegV spans 3 to 289 (TAIITDSTAS…IDAFSISLLL (287 aa)). Hexadecanoate is bound by residues threonine 62 and serine 94.

Its function is as follows. May bind long-chain fatty acids, such as palmitate, and may play a role in lipid transport or fatty acid metabolism. This chain is DegV domain-containing protein MG326 homolog, found in Mycoplasma pneumoniae (strain ATCC 29342 / M129 / Subtype 1) (Mycoplasmoides pneumoniae).